Consider the following 202-residue polypeptide: Superoxide dismutase [Mn] (202 aa).

4 residues coordinate Mn(2+): His27, His82, Asp164, and His168.

Belongs to the iron/manganese superoxide dismutase family. In terms of assembly, homodimer. Requires Mn(2+) as cofactor.

The enzyme catalyses 2 superoxide + 2 H(+) = H2O2 + O2. Destroys superoxide anion radicals which are normally produced within the cells and which are toxic to biological systems. The protein is Superoxide dismutase [Mn] (sodA) of Listeria innocua serovar 6a (strain ATCC BAA-680 / CLIP 11262).